The chain runs to 132 residues: Small ribosomal subunit protein uS9 (132 aa).

A disordered region spans residues 100 to 132 (LKSNGLLTRDDRTKERKKPGLKRARKAPQYTKR). Positions 114–132 (ERKKPGLKRARKAPQYTKR) are enriched in basic residues.

This sequence belongs to the universal ribosomal protein uS9 family.

The protein is Small ribosomal subunit protein uS9 of Dehalococcoides mccartyi (strain ATCC BAA-2100 / JCM 16839 / KCTC 5957 / BAV1).